Here is a 119-residue protein sequence, read N- to C-terminus: Small ribosomal subunit protein uS13 (119 aa).

The segment at R92 to R119 is disordered.

Belongs to the universal ribosomal protein uS13 family. As to quaternary structure, part of the 30S ribosomal subunit. Forms a loose heterodimer with protein S19. Forms two bridges to the 50S subunit in the 70S ribosome.

In terms of biological role, located at the top of the head of the 30S subunit, it contacts several helices of the 16S rRNA. In the 70S ribosome it contacts the 23S rRNA (bridge B1a) and protein L5 of the 50S subunit (bridge B1b), connecting the 2 subunits; these bridges are implicated in subunit movement. Contacts the tRNAs in the A and P-sites. This chain is Small ribosomal subunit protein uS13, found in Halorhodospira halophila (strain DSM 244 / SL1) (Ectothiorhodospira halophila (strain DSM 244 / SL1)).